The sequence spans 138 residues: Small ribosomal subunit protein uS11c (138 aa).

Belongs to the universal ribosomal protein uS11 family. As to quaternary structure, part of the 30S ribosomal subunit.

It localises to the plastid. It is found in the chloroplast. The polypeptide is Small ribosomal subunit protein uS11c (Illicium oligandrum (Star anise)).